A 350-amino-acid polypeptide reads, in one-letter code: MKKLVATAPRVAALVEYEDRAILANEVKIRVRFGAPKHGTEVVDFRAASPFIDEDFNGEWQMFTPRPADAPRGIEFGKFQLGNMVVGDIIECGSDVTDYAVGDSVCGYGPLSETVIINAVNNYKLRKMPQGSSWKNAVCYDPAQFAMSGVRDANVRVGDFVVVVGLGAIGQIAIQLAKRAGASVVIGVDPIAHRCDIARRHGADFCLNPIGTDVGKEIKTLTGKQGADVIIETSGYADALQSALRGLAYGGTISYVAFAKPFAEGFNLGREAHFNNAKIVFSRACSEPNPDYPRWSRKRIEETCWELLMNGYLNCEDLIDPVVTFANSPESYMQYVDQHPEQSIKMGVTF.

It belongs to the zinc-containing alcohol dehydrogenase family. It depends on Zn(2+) as a cofactor.

The enzyme catalyses a D-guloside + NAD(+) = a 3-dehydro-D-guloside + NADH + H(+). Functionally, catalyzes the NAD(+)-dependent oxidation of the hydroxyl group at C3 of D-gulosides leading to 3-dehydro-D-gulosides. Probably functions in a metabolic pathway that transforms D-gulosides to D-glucosides. Is also able to catalyze the reverse reactions, i.e. the NADH-dependent reduction of the oxo group at C3 of 3-dehydro-D-gulosides leading to D-gulosides. In vitro, can oxidize D-gulose and methyl beta-D-guloside, and reduce methyl alpha-3-dehydro-D-guloside and methyl beta-3-dehydro-D-guloside. However, the actual specific physiological substrates for this metabolic pathway are unknown. This is D-guloside 3-dehydrogenase (ycjQ) from Escherichia coli (strain K12).